The chain runs to 274 residues: NH(3)-dependent NAD(+) synthetase (274 aa).

46–53 (GISGGQDS) serves as a coordination point for ATP. A Mg(2+)-binding site is contributed by aspartate 52. Arginine 140 is a deamido-NAD(+) binding site. Threonine 160 is a binding site for ATP. Glutamate 165 contributes to the Mg(2+) binding site. Deamido-NAD(+) contacts are provided by lysine 173 and aspartate 180. ATP is bound by residues lysine 189 and threonine 211. Deamido-NAD(+) is bound at residue 260–261 (HK).

It belongs to the NAD synthetase family. As to quaternary structure, homodimer.

It carries out the reaction deamido-NAD(+) + NH4(+) + ATP = AMP + diphosphate + NAD(+) + H(+). It functions in the pathway cofactor biosynthesis; NAD(+) biosynthesis; NAD(+) from deamido-NAD(+) (ammonia route): step 1/1. In terms of biological role, catalyzes the ATP-dependent amidation of deamido-NAD to form NAD. Uses ammonia as a nitrogen source. This is NH(3)-dependent NAD(+) synthetase from Streptococcus pyogenes serotype M1.